The following is a 75-amino-acid chain: Conotoxin VnMKLT2-012 (75 aa).

An N-terminal signal peptide occupies residues 1–23 (MMKLTCVLIIAVLFLTACQLTTA). Positions 24–45 (ETRDEYRAVRSSDEVRNSRSTR) are excised as a propeptide. Over residues 31 to 45 (AVRSSDEVRNSRSTR) the composition is skewed to basic and acidic residues. Residues 31-50 (AVRSSDEVRNSRSTRDCSGS) form a disordered region. Intrachain disulfides connect Cys-47–Cys-60, Cys-54–Cys-65, and Cys-59–Cys-74.

It belongs to the conotoxin O1 superfamily. As to expression, expressed by the venom duct.

Its subcellular location is the secreted. This is Conotoxin VnMKLT2-012 from Conus ventricosus (Mediterranean cone).